A 643-amino-acid chain; its full sequence is MLLPCHWVLDATFSDGSLGQWVKNTCATYALSPVVLPPQPQPRKKATDKDYSAFHLGHLREVRLFLRGGTSDQRMDSLVLCPTYFKLWRTLSGSPGLQLSDLHFGSQPEGKFSLRRAVSVKQREEPQDWPLNEKRTLWKDSDLPTWRRGTGYTLSLPAVSPGKRLWGEKAGSLPESEPLFTYTLDEKVDKLVQFLLLKYQAKEPLTRAEMQMNVINTYTGYFPMIFRKAREFIEILFGISLTEVDPDHFYVFVNTLDLTCEGSLSDEQGMPQNRLLILILSVIFIKGNCASEEVIWEVLNAIGPWSALAGFADVLSRLALWESEGPEAFCEESGLRSAEGSVLDLANPQGLAGHRQEDGRRGLTEASPQQKKGGEDEDMPAAGMPPLPQSPPEIPPQGPPKISPQGPPQSPPQSPLDSCSSPLLWTRLDEESSSEEEDTATWHALPESESLPRYALDEKVAELVQFLLLKYQTKEPVTKAEMLTTVIKKYKDYFPMIFGKAHEFIELIFGIALTDMDPDNHSYFFEDTLDLTYEGSLIDDQGMPKNCLLILILSMIFIKGSCVPEEVIWEVLSAIGPIQRPAREVLEFLSKLSSIIPSAFPSWYMDALKDMEDRAQAIIDTTDDATAMASASPSVMSTNFCPE.

2 consecutive MAGE domains span residues 184–384 (LDEK…AAGM) and 456–643 (LDEK…FCPE). Residues 347–421 (NPQGLAGHRQ…PQSPLDSCSS (75 aa)) are disordered. Over residues 354–363 (HRQEDGRRGL) the composition is skewed to basic and acidic residues. Positions 383–414 (GMPPLPQSPPEIPPQGPPKISPQGPPQSPPQS) are enriched in pro residues. Phosphothreonine is present on residues Thr478, Thr484, and Thr485.

In terms of tissue distribution, expressed in testis. Not expressed in other normal tissues, but is expressed in tumors of different histological origins.

The chain is Melanoma-associated antigen C3 (MAGEC3) from Homo sapiens (Human).